The following is a 220-amino-acid chain: Fructose-6-phosphate aldolase (220 aa).

Lysine 85 functions as the Schiff-base intermediate with substrate in the catalytic mechanism.

The protein belongs to the transaldolase family. Type 3A subfamily. Homodecamer.

The protein resides in the cytoplasm. It catalyses the reaction beta-D-fructose 6-phosphate = dihydroxyacetone + D-glyceraldehyde 3-phosphate. Functionally, catalyzes the reversible formation of fructose 6-phosphate from dihydroxyacetone and D-glyceraldehyde 3-phosphate via an aldolization reaction. The polypeptide is Fructose-6-phosphate aldolase (Salmonella gallinarum (strain 287/91 / NCTC 13346)).